We begin with the raw amino-acid sequence, 1121 residues long: Peroxisomal ATPase PEX1 (1121 aa).

Disordered stretches follow at residues 187–221 (SISSVRSDSSGHRIRRVRSSTSTATGRRSVTNNGE) and 1099–1121 (SGRDGNMPDGTASNEIGARSTLM). The segment covering 205–217 (SSTSTATGRRSVT) has biased composition (low complexity).

The protein belongs to the AAA ATPase family. In terms of assembly, interacts with PEX6; forming the PEX1-PEX6 AAA ATPase complex, which is composed of a heterohexamer formed by a trimer of PEX1-PEX6 dimers.

The protein localises to the membrane. The enzyme catalyses ATP + H2O = ADP + phosphate + H(+). Functionally, component of the PEX1-PEX6 AAA ATPase complex involved in peroxisome biosynthesis. The complex acts as a protein dislocase complex that mediates the ATP-dependent extraction of the PEX5 receptor from peroxisomal membranes, an essential step for PEX5 recycling. Specifically recognizes PEX5 monoubiquitinated at 'Cys-6', and pulls it out of the peroxisome lumen through the PEX2-PEX10-PEX12 retrotranslocation channel. Extraction by the PEX1-PEX6 AAA ATPase complex is accompanied by unfolding of the TPR repeats and release of bound cargo from PEX5. This Komagataella phaffii (strain GS115 / ATCC 20864) (Yeast) protein is Peroxisomal ATPase PEX1.